Consider the following 275-residue polypeptide: Translation initiation factor 2 subunit alpha (275 aa).

Residues Gly-12–Lys-83 form the S1 motif domain.

The protein belongs to the eIF-2-alpha family. In terms of assembly, heterotrimer composed of an alpha, a beta and a gamma chain.

Its function is as follows. eIF-2 functions in the early steps of protein synthesis by forming a ternary complex with GTP and initiator tRNA. The chain is Translation initiation factor 2 subunit alpha from Thermococcus onnurineus (strain NA1).